The following is an 848-amino-acid chain: Phosphatidate phosphatase LPIN3 (848 aa).

Residues 1–108 (MNYVGQLAET…VPPRLCTSPI (108 aa)) form an N-LIP region. Disordered regions lie at residues 97–233 (EDVP…SPLR), 271–298 (PEEPSPSSSPSEAGVDTLSPPVLHPGVR), and 314–373 (AVDS…NQHL). The short motif at 135–144 (GRRKRRRRRK) is the Nuclear localization signal element. Over residues 135–146 (GRRKRRRRRKPR) the composition is skewed to basic residues. The span at 151–164 (DAVDSSSEELEAGA) shows a compositional bias: acidic residues. 2 positions are modified to phosphoserine: S155 and S156. Over residues 165 to 191 (ESELTLLEKPTPESPSAQEAEEPSSQP) the composition is skewed to low complexity. A Phosphoserine modification is found at S218. Over residues 271-282 (PEEPSPSSSPSE) the composition is skewed to low complexity. A compositionally biased stretch (polar residues) spans 342–358 (KSWSWTTPESHTPSGHP). S460 is modified (phosphoserine). Residues 536–556 (EEHSSQREKAATRKQQGEKTE) show a composition bias toward basic and acidic residues. The interval 536–568 (EEHSSQREKAATRKQQGEKTEVLSSDDDVPDSP) is disordered. The C-LIP stretch occupies residues 587–789 (YKKSLRLSSD…RIFTVNPRGE (203 aa)). Residues 641 to 645 (DIDGT) carry the DXDXT motif motif. The LXXIL motif motif lies at 652-656 (LGHIL).

Belongs to the lipin family. Mg(2+) serves as cofactor. As to expression, significant expression in intestine and other regions of the gastrointestinal tract.

Its subcellular location is the nucleus. It catalyses the reaction a 1,2-diacyl-sn-glycero-3-phosphate + H2O = a 1,2-diacyl-sn-glycerol + phosphate. Its activity is regulated as follows. Inhibited by N-ethylmaleimide. In terms of biological role, magnesium-dependent phosphatidate phosphatase enzyme which catalyzes the conversion of phosphatidic acid to diacylglycerol during triglyceride, phosphatidylcholine and phosphatidylethanolamine biosynthesis therefore regulates fatty acid metabolism. The sequence is that of Phosphatidate phosphatase LPIN3 from Mus musculus (Mouse).